We begin with the raw amino-acid sequence, 329 residues long: Deoxynucleotidyltransferase terminal-interacting protein 1 (329 aa).

Positions 1–27 (MGATGDVEQPRGPGGAERGGPELGDAG) are disordered. Residues 12–22 (GPGGAERGGPE) show a composition bias toward gly residues. The important for dimerization stretch occupies residues 56–147 (MTTSFTDPAI…RLTHELPGIK (92 aa)). The segment at residues 159-173 (RGSPIPKKRKGRPPG) is a DNA-binding region (a.T hook). S161 is subject to Phosphoserine. A Nuclear localization signal motif is present at residues 164–170 (PKKRKGR). The important for DNA and nucleosome binding stretch occupies residues 197–316 (REGPKWDPAR…MRKYMETLRT (120 aa)). The segment at residues 216 to 237 (GSRANKALGMGGTRGRIYIKHP) is a DNA-binding region (H-T-H motif).

Monomer and homodimer. A minor proportion may form homotrimers. Interacts with ZNF541. Interacts with the terminal deoxynucleotidyltransferase DNTT. Interacts with TRERF1. Identified in a histone deacetylase complex that contains DNTTIP1, HDAC1 and MIDEAS; this complex assembles into a tetramer that contains four copies of each protein chain. Component of a histone deacetylase complex containing DNTTIP1, ZNF541, HDAC1 and HDAC2. Identified in a complex with KCTD19, HDAC1, HDAC2 and ZNF541.

The protein localises to the nucleus. Its function is as follows. Increases DNTT terminal deoxynucleotidyltransferase activity (in vitro). Also acts as a transcriptional regulator, binding to the consensus sequence 5'-GNTGCATG-3' following an AT-tract. Associates with RAB20 promoter and positively regulates its transcription. Binds DNA and nucleosomes; may recruit HDAC1 complexes to nucleosomes or naked DNA. This chain is Deoxynucleotidyltransferase terminal-interacting protein 1 (DNTTIP1), found in Bos taurus (Bovine).